The primary structure comprises 192 residues: Peptidyl-tRNA hydrolase (192 aa).

Residue Tyr18 participates in tRNA binding. The active-site Proton acceptor is His23. Phe69, Asn71, and Asn117 together coordinate tRNA.

This sequence belongs to the PTH family. In terms of assembly, monomer.

It is found in the cytoplasm. The catalysed reaction is an N-acyl-L-alpha-aminoacyl-tRNA + H2O = an N-acyl-L-amino acid + a tRNA + H(+). Functionally, hydrolyzes ribosome-free peptidyl-tRNAs (with 1 or more amino acids incorporated), which drop off the ribosome during protein synthesis, or as a result of ribosome stalling. Catalyzes the release of premature peptidyl moieties from peptidyl-tRNA molecules trapped in stalled 50S ribosomal subunits, and thus maintains levels of free tRNAs and 50S ribosomes. In Neisseria meningitidis serogroup B (strain ATCC BAA-335 / MC58), this protein is Peptidyl-tRNA hydrolase.